The primary structure comprises 502 residues: Glucose-6-phosphate isomerase (502 aa).

The active-site Proton donor is glutamate 331. Catalysis depends on residues histidine 362 and lysine 471.

Belongs to the GPI family.

The protein resides in the cytoplasm. It catalyses the reaction alpha-D-glucose 6-phosphate = beta-D-fructose 6-phosphate. Its pathway is carbohydrate biosynthesis; gluconeogenesis. It participates in carbohydrate degradation; glycolysis; D-glyceraldehyde 3-phosphate and glycerone phosphate from D-glucose: step 2/4. Its function is as follows. Catalyzes the reversible isomerization of glucose-6-phosphate to fructose-6-phosphate. In Xylella fastidiosa (strain M12), this protein is Glucose-6-phosphate isomerase.